A 563-amino-acid chain; its full sequence is Probable lysosomal cobalamin transporter (563 aa).

Transmembrane regions (helical) follow at residues 8–28 (LIWFAYLIVITVLIVVASVFI), 40–60 (FVTFMCVFSIAALLATVMLLP), 95–115 (VIYYSLYFLDALLCLVGIPFA), 144–164 (YTLAFIAVVIALVLVGFFAPM), and 188–208 (AFTFLLGFVTTIGSCLYVFYT). Asn228 carries N-linked (GlcNAc...) asparagine glycosylation. The next 4 helical transmembrane spans lie at 314–334 (GGFSLFLVGLSTWISLLMTVI), 374–394 (IIFALIVFLFFWGSVVGVVAV), 416–436 (MLLATAMLTLITLGLNYSVVM), and 506–526 (FGALLLWAHFLFLGIYLVILV). Residues 537 to 563 (ERQLDEDAEEAEEESLLASTGRSGNPT) are disordered. The segment covering 539 to 551 (QLDEDAEEAEEES) has biased composition (acidic residues).

The protein belongs to the LIMR family. LMBRD1 subfamily.

It localises to the lysosome membrane. Functionally, probable lysosomal cobalamin transporter. Required to export cobalamin from lysosomes allowing its conversion to cofactors. This chain is Probable lysosomal cobalamin transporter, found in Neosartorya fischeri (strain ATCC 1020 / DSM 3700 / CBS 544.65 / FGSC A1164 / JCM 1740 / NRRL 181 / WB 181) (Aspergillus fischerianus).